Reading from the N-terminus, the 424-residue chain is Enolase (424 aa).

Q165 lines the (2R)-2-phosphoglycerate pocket. Catalysis depends on E207, which acts as the Proton donor. Mg(2+) is bound by residues D244, E283, and D310. Residues K335, R364, S365, and K386 each coordinate (2R)-2-phosphoglycerate. Catalysis depends on K335, which acts as the Proton acceptor.

This sequence belongs to the enolase family. Mg(2+) serves as cofactor.

It localises to the cytoplasm. The protein localises to the secreted. The protein resides in the cell surface. It catalyses the reaction (2R)-2-phosphoglycerate = phosphoenolpyruvate + H2O. Its pathway is carbohydrate degradation; glycolysis; pyruvate from D-glyceraldehyde 3-phosphate: step 4/5. Its function is as follows. Catalyzes the reversible conversion of 2-phosphoglycerate (2-PG) into phosphoenolpyruvate (PEP). It is essential for the degradation of carbohydrates via glycolysis. In Chlamydia trachomatis serovar D (strain ATCC VR-885 / DSM 19411 / UW-3/Cx), this protein is Enolase.